The primary structure comprises 95 residues: Small ribosomal subunit protein bS6 (95 aa).

The protein belongs to the bacterial ribosomal protein bS6 family.

In terms of biological role, binds together with bS18 to 16S ribosomal RNA. The chain is Small ribosomal subunit protein bS6 from Symbiobacterium thermophilum (strain DSM 24528 / JCM 14929 / IAM 14863 / T).